A 479-amino-acid polypeptide reads, in one-letter code: 3-isopropylmalate dehydratase large subunit (479 aa).

The [4Fe-4S] cluster site is built by Cys-353, Cys-414, and Cys-417.

The protein belongs to the aconitase/IPM isomerase family. LeuC type 1 subfamily. In terms of assembly, heterodimer of LeuC and LeuD. The cofactor is [4Fe-4S] cluster.

The catalysed reaction is (2R,3S)-3-isopropylmalate = (2S)-2-isopropylmalate. It participates in amino-acid biosynthesis; L-leucine biosynthesis; L-leucine from 3-methyl-2-oxobutanoate: step 2/4. Catalyzes the isomerization between 2-isopropylmalate and 3-isopropylmalate, via the formation of 2-isopropylmaleate. This is 3-isopropylmalate dehydratase large subunit from Xanthomonas campestris pv. campestris (strain 8004).